The primary structure comprises 417 residues: Prostaglandin E2 receptor EP3 subtype (417 aa).

Over 1 to 52 (MKATRDHASAPFCTRFNHSDPGIWAAERAVEAPNNLTLPPEPSEDCGSVSVA) the chain is Extracellular. Asn-17 and Asn-35 each carry an N-linked (GlcNAc...) asparagine glycan. Residues 53-77 (FSMTMMITGFVGNALAITLVSKSYR) traverse the membrane as a helical segment. The Cytoplasmic segment spans residues 78-90 (RREGKRKKSFLLC). The chain crosses the membrane as a helical span at residues 91–111 (IGWLALTDMVGQLLTSPVVIV). Residues 112-130 (LYLSHQRWEQLDPSGRLCT) lie on the Extracellular side of the membrane. A helical transmembrane segment spans residues 131–152 (FFGLTMTVFGLSSLFIASAMAV). Residues 153 to 174 (ERALATRAPHWYSSHMKTSVTR) are Cytoplasmic-facing. A helical membrane pass occupies residues 175-196 (AVLLGVWLAVLAFALLPVLGVG). Topologically, residues 197–226 (QYTIQWPGTWCFISTGPGGNGTNSRQNWGN) are extracellular. Asn-216 is a glycosylation site (N-linked (GlcNAc...) asparagine). A helical transmembrane segment spans residues 227–252 (VFFASAFAILGLSALVVTFACNLATI). Topologically, residues 253–282 (KALVSRCRAKATASQSSAQWGRITTETAIQ) are cytoplasmic. The helical transmembrane segment at 283-306 (LMGIMCVLSVCWSPLLIMMLKMIF) threads the bilayer. Asn-307 carries N-linked (GlcNAc...) asparagine glycosylation. Topologically, residues 307-326 (NHTSVEHCKTYTENQDECNF) are extracellular. A helical membrane pass occupies residues 327 to 348 (FLIAVRLASLNQILDPWVYLLL). Over 349-417 (RKILLQKFCQ…HIYLHTLEHQ (69 aa)) the chain is Cytoplasmic.

The protein belongs to the G-protein coupled receptor 1 family. Interacts (via C-terminus) with MKLN1.

It localises to the cell membrane. Functionally, receptor for prostaglandin E2 (PGE2). The various isoforms have identical ligand binding properties but interact with different second messenger systems: isoform EP3A couples to G(i)/G(o) proteins; isoform EP3B and isoform EP3C couple to G(s), and isoform EP3D couples to G(i), G(s) and G(p). Required for normal development of fever in response to pyrinogens, including IL1B, prostaglandin E2 and bacterial lipopolysaccharide (LPS). Required for normal potentiation of platelet aggregation by prostaglandin E2, and thus plays a role in the regulation of blood coagulation. Required for increased HCO3(-) secretion in the duodenum in response to mucosal acidification, and thereby contributes to the protection of the mucosa against acid-induced ulceration. Not required for normal kidney function, normal urine volume and osmolality. This chain is Prostaglandin E2 receptor EP3 subtype (PTGER3), found in Bos taurus (Bovine).